The primary structure comprises 222 residues: Cysteine protease inhibitor 1 (222 aa).

The first 26 residues, 1–26, serve as a signal peptide directing secretion; sequence MKSINILSFLLLSSTLSLVAFARSFT. Positions 27-42 are excised as a propeptide; it reads SENPIVLPTTCHDDDN. The Vacuolar targeting signal signature appears at 29–34; the sequence is NPIVLP. Disulfide bonds link cysteine 84/cysteine 136 and cysteine 185/cysteine 191.

Belongs to the protease inhibitor I3 (leguminous Kunitz-type inhibitor) family. In terms of tissue distribution, tubers, leaves.

It is found in the vacuole. Its function is as follows. Potent inhibitor of cathepsin l (cysteine protease). Does not inhibit trypsin or chymotrypsin (serine proteases). May protect the plant by inhibiting proteases of invading organisms. This Solanum tuberosum (Potato) protein is Cysteine protease inhibitor 1.